We begin with the raw amino-acid sequence, 425 residues long: Trigger factor (425 aa).

The PPIase FKBP-type domain maps to 163–248 (GDTAVIDFEG…VHEIKTKELP (86 aa)).

Belongs to the FKBP-type PPIase family. Tig subfamily.

Its subcellular location is the cytoplasm. It catalyses the reaction [protein]-peptidylproline (omega=180) = [protein]-peptidylproline (omega=0). Involved in protein export. Acts as a chaperone by maintaining the newly synthesized protein in an open conformation. Functions as a peptidyl-prolyl cis-trans isomerase. In Bacillus anthracis (strain A0248), this protein is Trigger factor.